A 30-amino-acid chain; its full sequence is Trypsin inhibitor 3 (30 aa).

3 disulfide bridges follow: Cys-4/Cys-21, Cys-11/Cys-23, and Cys-17/Cys-29.

The protein belongs to the protease inhibitor I7 (squash-type serine protease inhibitor) family.

The protein resides in the secreted. In terms of biological role, inhibits trypsin. The sequence is that of Trypsin inhibitor 3 from Momordica charantia (Bitter gourd).